The sequence spans 484 residues: Arginyl-tRNA--protein transferase 1 (484 aa).

This sequence belongs to the R-transferase family.

It catalyses the reaction an N-terminal L-alpha-aminoacyl-[protein] + L-arginyl-tRNA(Arg) = an N-terminal L-arginyl-L-aminoacyl-[protein] + tRNA(Arg) + H(+). Its function is as follows. Involved in the post-translational conjugation of arginine to the N-terminal aspartate or glutamate of a protein. This arginylation is required for degradation of the protein via the ubiquitin pathway. Does not arginylate cysteine residues. The sequence is that of Arginyl-tRNA--protein transferase 1 (Ate1) from Drosophila melanogaster (Fruit fly).